The sequence spans 98 residues: Small ribosomal subunit protein bS18 (98 aa).

This sequence belongs to the bacterial ribosomal protein bS18 family. As to quaternary structure, part of the 30S ribosomal subunit. Forms a tight heterodimer with protein bS6.

Its function is as follows. Binds as a heterodimer with protein bS6 to the central domain of the 16S rRNA, where it helps stabilize the platform of the 30S subunit. This chain is Small ribosomal subunit protein bS18, found in Flavobacterium johnsoniae (strain ATCC 17061 / DSM 2064 / JCM 8514 / BCRC 14874 / CCUG 350202 / NBRC 14942 / NCIMB 11054 / UW101) (Cytophaga johnsonae).